A 37-amino-acid polypeptide reads, in one-letter code: Mau operon transcriptional activator (37 aa).

This sequence belongs to the LysR transcriptional regulatory family.

Its function is as follows. Transcriptional activator of the mau genes involved in methylamine metabolism. The sequence is that of Mau operon transcriptional activator (mauR) from Paracoccus versutus (Thiobacillus versutus).